The primary structure comprises 436 residues: 3-ketoacyl-CoA thiolase (436 aa).

The Acyl-thioester intermediate role is filled by cysteine 99. Active-site proton acceptor residues include histidine 392 and cysteine 422.

It belongs to the thiolase-like superfamily. Thiolase family. As to quaternary structure, heterotetramer of two alpha chains (FadJ) and two beta chains (FadI).

The protein resides in the cytoplasm. The catalysed reaction is an acyl-CoA + acetyl-CoA = a 3-oxoacyl-CoA + CoA. Its pathway is lipid metabolism; fatty acid beta-oxidation. Functionally, catalyzes the final step of fatty acid oxidation in which acetyl-CoA is released and the CoA ester of a fatty acid two carbons shorter is formed. In Shewanella pealeana (strain ATCC 700345 / ANG-SQ1), this protein is 3-ketoacyl-CoA thiolase.